We begin with the raw amino-acid sequence, 294 residues long: MMRILLFILTNLSVMIIFGIILFITGIKSSSSFGLIIMSGVFGFGGSIISLLLSKYIAINSVNAKIIKNPKNDIENWLFNTIKLQSQKANIGTPDIAIYDAEDINAFATGPKKNSALIAVSTGLLNNMSKKEAEAVLAHEISHISNGDMITMTLIQGVVNTFVIFLSRVISKFIVNLFSTNKEDENSYESENSWSYFFISMALEVVFGILASIITFWFSRKREFYADAGSAEIVGKNNMIAALQKIKNTCEPNVGKELLAFCINGKKSFNEIFMSHPPIDKRIQALIQEKYMKK.

A run of 2 helical transmembrane segments spans residues 4–24 (ILLFILTNLSVMIIFGIILFI) and 33–53 (FGLIIMSGVFGFGGSIISLLL). H139 serves as a coordination point for Zn(2+). The active site involves E140. A Zn(2+)-binding site is contributed by H143. The next 2 helical transmembrane spans lie at 147–167 (GDMITMTLIQGVVNTFVIFLS) and 197–217 (FFISMALEVVFGILASIITFW). Residue E223 participates in Zn(2+) binding.

It belongs to the peptidase M48B family. It depends on Zn(2+) as a cofactor.

The protein localises to the cell membrane. This chain is Protease HtpX, found in Wigglesworthia glossinidia brevipalpis.